Here is a 119-residue protein sequence, read N- to C-terminus: MTMTKNDARKRRKVRIRKKIAGSTERPRLVVYRSNLHVYAQIVDDATGATLVATSTLAIGKAQAGAHCNKAGAELVGKEIARLAGEKSIKRVVFDRNGYLYHGRIKAVADGAREGGLEF.

The protein belongs to the universal ribosomal protein uL18 family. Part of the 50S ribosomal subunit; part of the 5S rRNA/L5/L18/L25 subcomplex. Contacts the 5S and 23S rRNAs.

In terms of biological role, this is one of the proteins that bind and probably mediate the attachment of the 5S RNA into the large ribosomal subunit, where it forms part of the central protuberance. The polypeptide is Large ribosomal subunit protein uL18 (Nitratidesulfovibrio vulgaris (strain DSM 19637 / Miyazaki F) (Desulfovibrio vulgaris)).